The primary structure comprises 148 residues: Snaclec jerdonuxin subunit beta (148 aa).

Residues Met-1–Ala-23 form the signal peptide. Disulfide bonds link Cys-27/Cys-38, Cys-55/Cys-144, and Cys-121/Cys-136. The C-type lectin domain maps to Tyr-34–Lys-145.

The protein belongs to the snaclec family. Tetramer of 4 heterodimers of alpha and beta subunits; disulfide-linked. Expressed by the venom gland.

Its subcellular location is the secreted. Functionally, snaclec that strongly induces platelet aggregation, in a dose-dependent manner. In Protobothrops jerdonii (Jerdon's pitviper), this protein is Snaclec jerdonuxin subunit beta.